The following is a 424-amino-acid chain: Probable serine/threonine-protein kinase PBL6 (424 aa).

A disordered region spans residues 1–26; the sequence is MGCFGRTPKSNKRSDTKTTKNNDFTP. The N-myristoyl glycine moiety is linked to residue glycine 2. Cysteine 3 carries S-palmitoyl cysteine lipidation. Threonine 87 is modified (phosphothreonine). The 280-residue stretch at 98–377 folds into the Protein kinase domain; that stretch reads FKSDCFLGEG…VVMALDHLAS (280 aa). Residues 104-112 and lysine 127 each bind ATP; that span reads LGEGGFGKV. Tyrosine 172 carries the phosphotyrosine modification. Aspartate 225 functions as the Proton acceptor in the catalytic mechanism. 2 positions are modified to phosphoserine: serine 229 and serine 259. Threonine 260 and threonine 265 each carry phosphothreonine. At tyrosine 273 the chain carries Phosphotyrosine.

It belongs to the protein kinase superfamily. Ser/Thr protein kinase family.

The protein resides in the cell membrane. It carries out the reaction L-seryl-[protein] + ATP = O-phospho-L-seryl-[protein] + ADP + H(+). It catalyses the reaction L-threonyl-[protein] + ATP = O-phospho-L-threonyl-[protein] + ADP + H(+). May be involved in plant defense signaling. In Arabidopsis thaliana (Mouse-ear cress), this protein is Probable serine/threonine-protein kinase PBL6.